A 97-amino-acid polypeptide reads, in one-letter code: Aspartyl/glutamyl-tRNA(Asn/Gln) amidotransferase subunit C (97 aa).

The protein belongs to the GatC family. In terms of assembly, heterotrimer of A, B and C subunits.

It catalyses the reaction L-glutamyl-tRNA(Gln) + L-glutamine + ATP + H2O = L-glutaminyl-tRNA(Gln) + L-glutamate + ADP + phosphate + H(+). The catalysed reaction is L-aspartyl-tRNA(Asn) + L-glutamine + ATP + H2O = L-asparaginyl-tRNA(Asn) + L-glutamate + ADP + phosphate + 2 H(+). Functionally, allows the formation of correctly charged Asn-tRNA(Asn) or Gln-tRNA(Gln) through the transamidation of misacylated Asp-tRNA(Asn) or Glu-tRNA(Gln) in organisms which lack either or both of asparaginyl-tRNA or glutaminyl-tRNA synthetases. The reaction takes place in the presence of glutamine and ATP through an activated phospho-Asp-tRNA(Asn) or phospho-Glu-tRNA(Gln). In Synechococcus sp. (strain JA-2-3B'a(2-13)) (Cyanobacteria bacterium Yellowstone B-Prime), this protein is Aspartyl/glutamyl-tRNA(Asn/Gln) amidotransferase subunit C.